A 130-amino-acid polypeptide reads, in one-letter code: S-adenosylmethionine decarboxylase proenzyme (130 aa).

S66 functions as the Schiff-base intermediate with substrate; via pyruvic acid in the catalytic mechanism. A Pyruvic acid (Ser); by autocatalysis modification is found at S66. Catalysis depends on H71, which acts as the Proton acceptor; for processing activity. C86 functions as the Proton donor; for catalytic activity in the catalytic mechanism.

This sequence belongs to the prokaryotic AdoMetDC family. Type 1 subfamily. Heterotetramer of two alpha and two beta chains arranged as a dimer of alpha/beta heterodimers. It depends on pyruvate as a cofactor. Post-translationally, is synthesized initially as an inactive proenzyme. Formation of the active enzyme involves a self-maturation process in which the active site pyruvoyl group is generated from an internal serine residue via an autocatalytic post-translational modification. Two non-identical subunits are generated from the proenzyme in this reaction, and the pyruvate is formed at the N-terminus of the alpha chain, which is derived from the carboxyl end of the proenzyme. The post-translation cleavage follows an unusual pathway, termed non-hydrolytic serinolysis, in which the side chain hydroxyl group of the serine supplies its oxygen atom to form the C-terminus of the beta chain, while the remainder of the serine residue undergoes an oxidative deamination to produce ammonia and the pyruvoyl group blocking the N-terminus of the alpha chain.

The catalysed reaction is S-adenosyl-L-methionine + H(+) = S-adenosyl 3-(methylsulfanyl)propylamine + CO2. It participates in amine and polyamine biosynthesis; S-adenosylmethioninamine biosynthesis; S-adenosylmethioninamine from S-adenosyl-L-methionine: step 1/1. Functionally, catalyzes the decarboxylation of S-adenosylmethionine to S-adenosylmethioninamine (dcAdoMet), the propylamine donor required for the synthesis of the polyamines spermine and spermidine from the diamine putrescine. The protein is S-adenosylmethionine decarboxylase proenzyme of Bacillus cytotoxicus (strain DSM 22905 / CIP 110041 / 391-98 / NVH 391-98).